Reading from the N-terminus, the 475-residue chain is UDP-glycosyltransferase 708A6 (475 aa).

UDP-alpha-D-glucose-binding positions include S286, 348 to 349 (WV), 366 to 374 (HCGWNSLTE), and 388 to 391 (FGDQ).

It belongs to the UDP-glycosyltransferase family. Expressed in radicles, hypocotyls and juvenile leaves. Expressed at low levels in roots.

Bifunctional glycosyltransferase that can produce both C- and O-glycosidated flavonoids. Converts 2-hydroxynaringenin to isovitexin. Converts eriodictyol to orientin and isoorientin. Converts naringenin and eriodictyol to naringenin 7-O-glucoside and eriodictyol 7-O-glucoside, respectively. The protein is UDP-glycosyltransferase 708A6 of Zea mays (Maize).